We begin with the raw amino-acid sequence, 864 residues long: Leukocyte tyrosine kinase receptor (864 aa).

A signal peptide spans 1–16; the sequence is MGCWGQLLVWFGAAGA. Over 17 to 424 the chain is Extracellular; that stretch reads ILCSSPGSQE…CMDLHKPPGP (408 aa). The segment covering 30–40 has biased composition (low complexity); it reads RSSPLPLASPS. A disordered region spans residues 30–64; sequence RSSPLPLASPSPRDPKVSAPPSILEPASPLNSPGT. Disulfide bonds link Cys-73–Cys-86 and Cys-168–Cys-179. Positions 239 to 297 are disordered; sequence YLRPRDRGRTQASPEKLENRSEAPGSGGRGGAAGGGGGWTSRAPSPQAGRSLQEGAEGG. The segment covering 241-259 has biased composition (basic and acidic residues); sequence RPRDRGRTQASPEKLENRS. Asn-257 is a glycosylation site (N-linked (GlcNAc...) asparagine). The span at 263 to 277 shows a compositional bias: gly residues; sequence GSGGRGGAAGGGGGW. Cys-300 and Cys-322 are oxidised to a cystine. N-linked (GlcNAc...) asparagine glycans are attached at residues Asn-380 and Asn-412. Residues 425-449 traverse the membrane as a helical segment; it reads LVLMVAVVATSTLSLLMVCGVLILV. Over 450–864 the chain is Cytoplasmic; the sequence is KQKKWQGLQE…QNLWNPTYRS (415 aa). The Protein kinase domain maps to 510–786; sequence VTLLRALGHG…LQYCTQDPDV (277 aa). ATP contacts are provided by residues 516–524 and Lys-544; that span reads LGHGAFGEV. Asp-643 functions as the Proton acceptor in the catalytic mechanism. Position 676 is a phosphotyrosine; by autocatalysis (Tyr-676). Disordered regions lie at residues 790-830 and 842-864; these read LLPM…KLKS and SGLK…TYRS. A compositionally biased stretch (polar residues) spans 852–864; it reads LQPQNLWNPTYRS.

The protein belongs to the protein kinase superfamily. Tyr protein kinase family. Insulin receptor subfamily. In terms of assembly, homodimer; homodimerizes following ligand-binding. Part of a complex including LTK, TNK2 and GRB2, in which GRB2 promotes LTK recruitment by TNK2. Phosphorylated at tyrosine residues by autocatalysis, which activates kinase activity. Expressed in non-hematopoietic cell lines and T- and B-cell lines.

The protein localises to the cell membrane. The catalysed reaction is L-tyrosyl-[protein] + ATP = O-phospho-L-tyrosyl-[protein] + ADP + H(+). With respect to regulation, activated by ligand-binding, leading to homodimerization and autophosphorylation. Receptor with a tyrosine-protein kinase activity. Following activation by ALKAL1 or ALKAL2 ligands at the cell surface, transduces an extracellular signal into an intracellular response. Ligand-binding to the extracellular domain induces tyrosine kinase activation, leading to activation of the mitogen-activated protein kinase (MAPK) pathway. Phosphorylates almost exclusively at the first tyrosine of the Y-x-x-x-Y-Y motif. The exact function of this protein is not known; studies with chimeric proteins demonstrate its ability to promote growth and specifically neurite outgrowth, and cell survival. Involved in regulation of the secretory pathway involving endoplasmic reticulum (ER) export sites (ERESs) and ER to Golgi transport. This is Leukocyte tyrosine kinase receptor from Homo sapiens (Human).